We begin with the raw amino-acid sequence, 648 residues long: Biosynthetic arginine decarboxylase (648 aa).

Lysine 109 carries the post-translational modification N6-(pyridoxal phosphate)lysine. 291–301 provides a ligand contact to substrate; the sequence is LDVGGGLGVDY.

Belongs to the Orn/Lys/Arg decarboxylase class-II family. SpeA subfamily. Requires Mg(2+) as cofactor. Pyridoxal 5'-phosphate serves as cofactor.

It carries out the reaction L-arginine + H(+) = agmatine + CO2. Functionally, catalyzes the biosynthesis of agmatine from arginine. This is Biosynthetic arginine decarboxylase from Prochlorococcus marinus (strain SARG / CCMP1375 / SS120).